The chain runs to 530 residues: Na(+)/H(+) antiporter NhaB (530 aa).

The next 10 membrane-spanning stretches (helical) occupy residues 13 to 33 (FLGQAPAWYKYTIVAFLLINP), 67 to 87 (PGGLLAIEAVMIGLTSAETVL), 90 to 110 (VVGNIEVMLLLIFMVAGIYFL), 138 to 158 (AAALLSAFLDALTVTAVVIAV), 205 to 225 (LLMHAAVGTALGGVCTLVGEP), 245 to 265 (MAPITLPVLVMGFFTCAFLEF), 302 to 333 (LVIQAITAVWLVIGLATHAASVGLVGLTVIIL), 350 to 370 (FEEALPFTALLTVFFAVVAVI), 449 to 469 (VATPNGQAAFLFLLTSALAPL), and 477 to 497 (MVIMALPYTIVMSITGLVMTA).

It belongs to the NhaB Na(+)/H(+) (TC 2.A.34) antiporter family.

The protein resides in the cell inner membrane. It catalyses the reaction 2 Na(+)(in) + 3 H(+)(out) = 2 Na(+)(out) + 3 H(+)(in). Na(+)/H(+) antiporter that extrudes sodium in exchange for external protons. The protein is Na(+)/H(+) antiporter NhaB of Alcanivorax borkumensis (strain ATCC 700651 / DSM 11573 / NCIMB 13689 / SK2).